A 65-amino-acid chain; its full sequence is Sec-independent protein translocase protein TatA (65 aa).

A helical membrane pass occupies residues 9–29 (ILIIVLLVVVVFGIGKLPQVG). The disordered stretch occupies residues 43 to 65 (SSGEEEKEEVETKEETKTIEKSE). Positions 45 to 54 (GEEEKEEVET) are enriched in acidic residues. Basic and acidic residues predominate over residues 55–65 (KEETKTIEKSE).

This sequence belongs to the TatA/E family. Forms a complex with TatC.

It localises to the cell membrane. Its function is as follows. Part of the twin-arginine translocation (Tat) system that transports large folded proteins containing a characteristic twin-arginine motif in their signal peptide across membranes. TatA could form the protein-conducting channel of the Tat system. The protein is Sec-independent protein translocase protein TatA of Dehalococcoides mccartyi (strain ATCC BAA-2266 / KCTC 15142 / 195) (Dehalococcoides ethenogenes (strain 195)).